Reading from the N-terminus, the 117-residue chain is G antigen 13 (117 aa).

Positions 1-117 (MSWRGRSTYY…PEEGEKQSQC (117 aa)) are disordered. Composition is skewed to acidic residues over residues 32-45 (FSDE…EEGE) and 87-96 (ECEDGPDGQE). Basic and acidic residues predominate over residues 103–117 (EEVKTPEEGEKQSQC).

This sequence belongs to the GAGE family.

The polypeptide is G antigen 13 (Homo sapiens (Human)).